The sequence spans 134 residues: MSWQTYVDDHLMADIEGQQGHHLAAAAILGHDGSVWAQSSTFPKFKPEEITNIMKDFDEPGHLAPTGLFLGGAKYMVIQGEPGAVIRGKKGSGGITIKKTNQALIFGIYEEPVTPGQCNMVVEKIRDYLVDQGY.

This sequence belongs to the profilin family. Occurs in many kinds of cells as a complex with monomeric actin in a 1:1 ratio.

It localises to the cytoplasm. It is found in the cytoskeleton. Its function is as follows. Binds to actin and affects the structure of the cytoskeleton. At high concentrations, profilin prevents the polymerization of actin, whereas it enhances it at low concentrations. By binding to PIP2, it inhibits the formation of IP3 and DG. The protein is Profilin-1 (PRO1) of Nicotiana tabacum (Common tobacco).